The chain runs to 305 residues: GMP synthase [glutamine-hydrolyzing] subunit B (305 aa).

Positions 2 to 184 (VKPEKFIPKA…LKLPDEICER (183 aa)) constitute a GMPS ATP-PPase domain. 29-35 (SGGVDSS) contacts ATP.

Heterodimer composed of a glutamine amidotransferase subunit (A) and a GMP-binding subunit (B).

It catalyses the reaction XMP + L-glutamine + ATP + H2O = GMP + L-glutamate + AMP + diphosphate + 2 H(+). The protein operates within purine metabolism; GMP biosynthesis; GMP from XMP (L-Gln route): step 1/1. Its function is as follows. Catalyzes the synthesis of GMP from XMP. The protein is GMP synthase [glutamine-hydrolyzing] subunit B of Methanosarcina barkeri (strain Fusaro / DSM 804).